The following is a 189-amino-acid chain: 3-isopropylmalate dehydratase small subunit (189 aa).

Belongs to the LeuD family. LeuD type 1 subfamily. Heterodimer of LeuC and LeuD.

The enzyme catalyses (2R,3S)-3-isopropylmalate = (2S)-2-isopropylmalate. Its pathway is amino-acid biosynthesis; L-leucine biosynthesis; L-leucine from 3-methyl-2-oxobutanoate: step 2/4. Its function is as follows. Catalyzes the isomerization between 2-isopropylmalate and 3-isopropylmalate, via the formation of 2-isopropylmaleate. The protein is 3-isopropylmalate dehydratase small subunit of Francisella philomiragia subsp. philomiragia (strain ATCC 25017 / CCUG 19701 / FSC 153 / O#319-036).